A 301-amino-acid chain; its full sequence is Sulfate adenylyltransferase subunit 2 (301 aa).

The interval 278–301 is disordered; that stretch reads ERQGRLIDGDEPASMERKKREGYF.

The protein belongs to the PAPS reductase family. CysD subfamily. In terms of assembly, sulfate-activating enzymes, NodP and NodQ, may be physically associated.

The enzyme catalyses sulfate + ATP + H(+) = adenosine 5'-phosphosulfate + diphosphate. In terms of biological role, proposed to provide activated sulfate for transfer to nod factor. The sequence is that of Sulfate adenylyltransferase subunit 2 (nodP) from Azospirillum brasilense.